The following is a 154-amino-acid chain: Crossover junction endodeoxyribonuclease RuvC (154 aa).

Catalysis depends on residues D7, E67, and D139. Mg(2+) contacts are provided by D7, E67, and D139.

The protein belongs to the RuvC family. Homodimer which binds Holliday junction (HJ) DNA. The HJ becomes 2-fold symmetrical on binding to RuvC with unstacked arms; it has a different conformation from HJ DNA in complex with RuvA. In the full resolvosome a probable DNA-RuvA(4)-RuvB(12)-RuvC(2) complex forms which resolves the HJ. Mg(2+) serves as cofactor.

It localises to the cytoplasm. It carries out the reaction Endonucleolytic cleavage at a junction such as a reciprocal single-stranded crossover between two homologous DNA duplexes (Holliday junction).. Functionally, the RuvA-RuvB-RuvC complex processes Holliday junction (HJ) DNA during genetic recombination and DNA repair. Endonuclease that resolves HJ intermediates. Cleaves cruciform DNA by making single-stranded nicks across the HJ at symmetrical positions within the homologous arms, yielding a 5'-phosphate and a 3'-hydroxyl group; requires a central core of homology in the junction. The consensus cleavage sequence is 5'-(A/T)TT(C/G)-3'. Cleavage occurs on the 3'-side of the TT dinucleotide at the point of strand exchange. HJ branch migration catalyzed by RuvA-RuvB allows RuvC to scan DNA until it finds its consensus sequence, where it cleaves and resolves the cruciform DNA. In Prochlorococcus marinus (strain NATL1A), this protein is Crossover junction endodeoxyribonuclease RuvC.